We begin with the raw amino-acid sequence, 116 residues long: Large ribosomal subunit protein uL18 (116 aa).

The protein belongs to the universal ribosomal protein uL18 family. As to quaternary structure, part of the 50S ribosomal subunit; part of the 5S rRNA/L5/L18/L25 subcomplex. Contacts the 5S and 23S rRNAs.

Functionally, this is one of the proteins that bind and probably mediate the attachment of the 5S RNA into the large ribosomal subunit, where it forms part of the central protuberance. The sequence is that of Large ribosomal subunit protein uL18 from Shewanella putrefaciens (strain CN-32 / ATCC BAA-453).